The chain runs to 55 residues: Large ribosomal subunit protein bL33 (55 aa).

This sequence belongs to the bacterial ribosomal protein bL33 family.

This is Large ribosomal subunit protein bL33 from Sinorhizobium fredii (strain NBRC 101917 / NGR234).